A 118-amino-acid chain; its full sequence is Large ribosomal subunit protein uL18 (118 aa).

The protein belongs to the universal ribosomal protein uL18 family. In terms of assembly, part of the 50S ribosomal subunit; part of the 5S rRNA/L5/L18/L25 subcomplex. Contacts the 5S and 23S rRNAs.

Its function is as follows. This is one of the proteins that bind and probably mediate the attachment of the 5S RNA into the large ribosomal subunit, where it forms part of the central protuberance. The protein is Large ribosomal subunit protein uL18 of Mycoplasmopsis pulmonis (strain UAB CTIP) (Mycoplasma pulmonis).